Consider the following 256-residue polypeptide: MTNELSNAAGASQQGPAASSFSADTPPRTTAGGDVLVLLLIDVAPAARLWGYGRFVAGTTPALGEPGARFAKQLGTGYEGGFGLRPSATRQGLFVLFEDEAAADAFIGRSELVQTYRRNARELCIVKARPYSARGSWDGQKLRVGSPAPVDGPVAALTRASIRPSQAHRFWPNAGPSQDSLERAAGCRLAVGLGEAPFLRQATFSVWDSVAAMDAYARTGAHQRAIVASRDFFSESMFVRFVPLSIEGVWKGRRYG.

Residues 1–23 (MTNELSNAAGASQQGPAASSFSA) show a composition bias toward low complexity. The disordered stretch occupies residues 1 to 26 (MTNELSNAAGASQQGPAASSFSADTP).

This sequence belongs to the CrtA family. Heme is required as a cofactor.

The catalysed reaction is spheroidene + 4 reduced [2Fe-2S]-[ferredoxin] + 2 O2 + 4 H(+) = spheroiden-2-one + 4 oxidized [2Fe-2S]-[ferredoxin] + 3 H2O. The enzyme catalyses spirilloxanthin + 4 reduced [2Fe-2S]-[ferredoxin] + 2 O2 + 4 H(+) = 2-oxospirilloxanthin + 4 oxidized [2Fe-2S]-[ferredoxin] + 3 H2O. It carries out the reaction 2-oxospirilloxanthin + 4 reduced [2Fe-2S]-[ferredoxin] + 2 O2 + 4 H(+) = 2,2'-dioxospirilloxanthin + 4 oxidized [2Fe-2S]-[ferredoxin] + 3 H2O. It catalyses the reaction spheroidene + 2 reduced [2Fe-2S]-[ferredoxin] + O2 + 2 H(+) = 2-hydroxyspheroidene + 2 oxidized [2Fe-2S]-[ferredoxin] + H2O. The catalysed reaction is 2-hydroxyspheroidene + 2 reduced [2Fe-2S]-[ferredoxin] + O2 + 2 H(+) = 2,2-dihydroxyspheroidene + 2 oxidized [2Fe-2S]-[ferredoxin] + H2O. The enzyme catalyses 2,2-dihydroxyspheroidene = spheroiden-2-one + H2O. It carries out the reaction spirilloxanthin + 2 reduced [2Fe-2S]-[ferredoxin] + O2 + 2 H(+) = 2-hydroxyspirilloxanthin + 2 oxidized [2Fe-2S]-[ferredoxin] + H2O. It catalyses the reaction 2-hydroxyspirilloxanthin + 2 reduced [2Fe-2S]-[ferredoxin] + O2 + 2 H(+) = 2,2-dihydroxyspirilloxanthin + 2 oxidized [2Fe-2S]-[ferredoxin] + H2O. The catalysed reaction is 2,2-dihydroxyspirilloxanthin = 2-oxospirilloxanthin + H2O. The enzyme catalyses 2-oxospirilloxanthin + 2 reduced [2Fe-2S]-[ferredoxin] + O2 + 2 H(+) = 2'-hydroxy-2-oxospirilloxanthin + 2 oxidized [2Fe-2S]-[ferredoxin] + H2O. It carries out the reaction 2'-hydroxy-2-oxospirilloxanthin + 2 reduced [2Fe-2S]-[ferredoxin] + O2 + 2 H(+) = 2',2'-dihydroxy-2-oxospirilloxanthin + 2 oxidized [2Fe-2S]-[ferredoxin] + H2O. It catalyses the reaction 2',2'-dihydroxy-2-oxospirilloxanthin = 2,2'-dioxospirilloxanthin + H2O. It functions in the pathway carotenoid biosynthesis; spheroidene biosynthesis. The protein operates within carotenoid biosynthesis; spirilloxanthin biosynthesis. Functionally, involved in the biosynthesis of the carotenoids spheroidene and spirilloxanthin. Catalyzes the introduction of one keto group at the C-2 position of spheroidene and two keto groups at the C-2 and C-2' positions of spirilloxanthin. The sequence is that of Spheroidene monooxygenase from Rubrivivax gelatinosus (Rhodocyclus gelatinosus).